The following is a 219-amino-acid chain: MSITQEFNLLSNRFRTFYPVVIDIETAGFNPKTDAVLEIALITLKMDKLGWLHKEDILHFHIKPFKGSIINSDAIAFNKIDPFNPLRGAISETLAIESILEKVNYGIKIQGCTRGIVVAHNAHFDHNFLMAAIQRVKIKNNPFHPFVTFDTAALSGLAVGQTVLAKACKAIGLSFDNNQAHSALYDSLQTANLFCKIVNRWKGLGGWPINVKKSKQNSY.

Residues 20–194 enclose the Exonuclease domain; it reads VVIDIETAGF…YDSLQTANLF (175 aa). Mg(2+)-binding residues include aspartate 23, glutamate 25, histidine 181, and aspartate 186. Catalysis depends on histidine 181, which acts as the Proton donor/acceptor.

This sequence belongs to the RNase T family. As to quaternary structure, homodimer. The cofactor is Mg(2+).

Trims short 3' overhangs of a variety of RNA species, leaving a one or two nucleotide 3' overhang. Responsible for the end-turnover of tRNA: specifically removes the terminal AMP residue from uncharged tRNA (tRNA-C-C-A). Also appears to be involved in tRNA biosynthesis. The protein is Ribonuclease T of Buchnera aphidicola subsp. Schizaphis graminum (strain Sg).